Consider the following 227-residue polypeptide: UPF0173 metal-dependent hydrolase BCAH820_4729 (227 aa).

It belongs to the UPF0173 family.

This is UPF0173 metal-dependent hydrolase BCAH820_4729 from Bacillus cereus (strain AH820).